A 205-amino-acid polypeptide reads, in one-letter code: Large ribosomal subunit protein uL4 (205 aa).

Residues 65–99 (RQKGTGGARHGSRKSPTFRHGGVYKGPTPRSHGHD) are disordered.

This sequence belongs to the universal ribosomal protein uL4 family. As to quaternary structure, part of the 50S ribosomal subunit.

Its function is as follows. One of the primary rRNA binding proteins, this protein initially binds near the 5'-end of the 23S rRNA. It is important during the early stages of 50S assembly. It makes multiple contacts with different domains of the 23S rRNA in the assembled 50S subunit and ribosome. Functionally, forms part of the polypeptide exit tunnel. This chain is Large ribosomal subunit protein uL4, found in Ruegeria pomeroyi (strain ATCC 700808 / DSM 15171 / DSS-3) (Silicibacter pomeroyi).